Consider the following 296-residue polypeptide: Mycothiol acetyltransferase (296 aa).

2 N-acetyltransferase domains span residues tyrosine 17 to aspartate 146 and leucine 156 to lysine 296. Glutamate 44 contacts 1D-myo-inositol 2-(L-cysteinylamino)-2-deoxy-alpha-D-glucopyranoside. Residue leucine 81 to valine 83 participates in acetyl-CoA binding. Residues glutamate 183, lysine 222, and glutamate 230 each contribute to the 1D-myo-inositol 2-(L-cysteinylamino)-2-deoxy-alpha-D-glucopyranoside site. Residues valine 234–leucine 236 and arginine 241–aspartate 247 contribute to the acetyl-CoA site. Tyrosine 268 serves as a coordination point for 1D-myo-inositol 2-(L-cysteinylamino)-2-deoxy-alpha-D-glucopyranoside.

The protein belongs to the acetyltransferase family. MshD subfamily. Monomer.

It carries out the reaction 1D-myo-inositol 2-(L-cysteinylamino)-2-deoxy-alpha-D-glucopyranoside + acetyl-CoA = mycothiol + CoA + H(+). In terms of biological role, catalyzes the transfer of acetyl from acetyl-CoA to desacetylmycothiol (Cys-GlcN-Ins) to form mycothiol. This is Mycothiol acetyltransferase from Corynebacterium efficiens (strain DSM 44549 / YS-314 / AJ 12310 / JCM 11189 / NBRC 100395).